We begin with the raw amino-acid sequence, 132 residues long: Histone H2B.2 (132 aa).

The segment covering 1–19 (MAPKAEKKPASKAPAEKKP) has biased composition (basic and acidic residues). The disordered stretch occupies residues 1 to 39 (MAPKAEKKPASKAPAEKKPAAKKTSSSVDPSKKRTKARK). 2 positions are modified to N6-acetyllysine; alternate: Lys-7 and Lys-8. Residues Lys-7 and Lys-8 each participate in a glycyl lysine isopeptide (Lys-Gly) (interchain with G-Cter in SUMO); alternate cross-link. Phosphoserine is present on Ser-11. Lys-12 is subject to N6-acetyllysine. An N6-acetyllysine; alternate modification is found at Lys-17. A Glycyl lysine isopeptide (Lys-Gly) (interchain with G-Cter in SUMO); alternate cross-link involves residue Lys-17. Lys-18 participates in a covalent cross-link: Glycyl lysine isopeptide (Lys-Gly) (interchain with G-Cter in SUMO). Residue Lys-125 forms a Glycyl lysine isopeptide (Lys-Gly) (interchain with G-Cter in ubiquitin) linkage.

The protein belongs to the histone H2B family. In terms of assembly, the nucleosome is a histone octamer containing two molecules each of H2A, H2B, H3 and H4 assembled in one H3-H4 heterotetramer and two H2A-H2B heterodimers. The octamer wraps approximately 147 bp of DNA. Monoubiquitinated by the UBC2-BRE1 complex to form H2BK123ub1. H2BK123ub1 gives a specific tag for epigenetic transcriptional activation and is also prerequisite for H3K4me and H3K79me formation. H2BK123ub1 also modulates the formation of double-strand breaks during meiosis and is a prerequisite for DNA-damage checkpoint activation. Post-translationally, phosphorylated by STE20 to form H2BS10ph during progression through meiotic prophase. May be correlated with chromosome condensation. In terms of processing, acetylated by GCN5 to form H2BK11ac and H2BK16ac. H2BK16ac can also be formed by ESA1. Acetylation of N-terminal lysines and particularly formation of H2BK11acK16ac has a positive effect on transcription. Sumoylation to form H2BK6su or H2BK7su, and probably also H2BK16su or H2BK17su, occurs preferentially near the telomeres and represses gene transcription.

Its subcellular location is the nucleus. It localises to the chromosome. In terms of biological role, core component of nucleosome. Nucleosomes wrap and compact DNA into chromatin, limiting DNA accessibility to the cellular machineries which require DNA as a template. Histones thereby play a central role in transcription regulation, DNA repair, DNA replication and chromosomal stability. DNA accessibility is regulated via a complex set of post-translational modifications of histones, also called histone code, and nucleosome remodeling. The chain is Histone H2B.2 (HTB1) from Kluyveromyces lactis (strain ATCC 8585 / CBS 2359 / DSM 70799 / NBRC 1267 / NRRL Y-1140 / WM37) (Yeast).